The chain runs to 131 residues: Small ribosomal subunit protein uS11 (131 aa).

It belongs to the universal ribosomal protein uS11 family. As to quaternary structure, part of the 30S ribosomal subunit.

Located on the platform of the 30S subunit. The protein is Small ribosomal subunit protein uS11 of Haloquadratum walsbyi (strain DSM 16790 / HBSQ001).